The following is a 1077-amino-acid chain: MALLNDVTSVAECNRQTTMTDEHKSNINSNSSHSSNNNNNGSSSNNDNNSNDDAASSSNSKNNNTSNESSHSNNNTSSIIAEAAAKFLLKNGLNGSSSTSYPPLPPPLPANLSRTTTPTTTTTPSSSSSTASNGFLPHAKTPKSSSIMAASAAVAASVVGATASKPTIDVLGGVLDYSSLGGAATGSLPTTAVVAAAAGTAKIGKGSNSGGSFDMGRTPISTHGNNSWGGYGGRLQFFKDGKFILELARSKDGDKSGWVSVTRKTFRPPSAATSATVTPTSAVTTAYPKNENSTSLSFSDDNSSIQSSPWQRDQPWKQSRPRRGISKELSLFFHRPRNSTLGRAALRTAARKRRRPHEPLTTSEDQQPIFATAIKAENGDDTLKAEAAEAVEIENVAVADTTTNEIKIEKPDTIKGEDDAERLEKEPKKAVSDDSESKEASPGQQVEPQPKDETVDVEMKMNTSEDEEPMTELPRITNAVNGDLNGDLKASIGKPKSKPKPKAKLSSIIQKLIDSVPARLEQMSKTSAVIASTTTSSDRIGGGLSHALTHKVSPPSSATAAGRLVEYHTQHVSPRKRILREFEKVSLEDNGCVNNGSGGASSGGAGGKRSRAKGTSTSSPAGKASPMNLAPPQGKPSPSPGSSSSSTSPATLSTQPTRLNSSYSIHSLLGGSSGSGSSSFSSSGKKCGDHPAAIISNVHHPQHSMYQPSSSSYPRALLTSPKSPDVSGSNGGGGKSPSHTGTKKRSPPYSAGSPVDYGHSFYRDPYAGAGRPSTSGSASQDLSPPRSSPASPATTPRTVPKKTASIRREFASPSASSSSCPSPGDRSASPPERRHMQQQPHLQRSSPLHYYMYPPPPQVNGNGSAGSPTSAPPTSNSSAAAVAAAAAAAAAYIPSPSIYNPYISTLAALRHNPLWMHHYQTGASPLLSPHPQPGGSAAAAAAAAAARLSPQSAYHAFAYNGVGAAVAAAAAAAAFGQPAPSPHTHPHLAHPHQHPHPAALTTHHSPAHLATPKLTDSSTDQMSATSSHRTASTSPSSSSASASSSAATSGASSSAMFHTSSLRNEQSSDLPLNLSKH.

Disordered stretches follow at residues 14 to 75, 97 to 141, 269 to 322, 340 to 368, 408 to 504, 533 to 876, and 976 to 1077; these read NRQT…SNNN, SSTS…HAKT, PSAA…SRPR, TLGR…DQQP, IEKP…PKAK, TTTS…PTSN, and GQPA…LSKH. 4 stretches are compositionally biased toward low complexity: residues 26 to 75, 115 to 130, 269 to 286, and 293 to 308; these read NINS…SNNN, TTTP…SSST, PSAA…VTTA, and STSL…IQSS. 2 stretches are compositionally biased toward basic and acidic residues: residues 408–439 and 449–459; these read IEKP…ESKE and QPKDETVDVEM. Residues 596 to 607 show a composition bias toward gly residues; it reads GSGGASSGGAGG. Residues 640–684 are compositionally biased toward low complexity; it reads PGSSSSSTSPATLSTQPTRLNSSYSIHSLLGGSSGSGSSSFSSSG. The segment covering 704-713 has biased composition (polar residues); it reads SMYQPSSSSY. A phosphoserine mark is found at serine 720, serine 723, serine 746, and serine 753. Residues 772–782 are compositionally biased toward polar residues; the sequence is PSTSGSASQDL. Composition is skewed to low complexity over residues 783-798 and 811-829; these read SPPR…TPRT and ASPS…RSAS. Over residues 837–846 the composition is skewed to polar residues; that stretch reads QQQPHLQRSS. Positions 865 to 876 are enriched in low complexity; the sequence is AGSPTSAPPTSN. Residues 984 to 995 show a composition bias toward basic residues; that stretch reads THPHLAHPHQHP. Low complexity-rich tracts occupy residues 996-1012 and 1023-1055; these read HPAA…LATP and SATS…SSSA. Residues 1056-1070 are compositionally biased toward polar residues; it reads MFHTSSLRNEQSSDL.

In terms of tissue distribution, during embryogenesis expression is primarily in endo- and mesodermal cell layers. Ovary, embryos, larval and pupal imaginal disks.

The protein localises to the nucleus. In terms of biological role, is a potent antagonist of neurogenic gene activity during sensory organ development. The expression of distinct cell fates by the trichogen (shaft) / tormogen (socket) sister cell pair depends on the level of H activity. A certain threshold level of H activity is required, below which both sister cells adopt the tormogen fate. The chain is Protein hairless (H) from Drosophila melanogaster (Fruit fly).